Here is a 319-residue protein sequence, read N- to C-terminus: D-alanine--D-alanine ligase (319 aa).

In terms of domain architecture, ATP-grasp spans 109 to 313; sequence KRVWLAEGLP…YEQLCLHILQ (205 aa). 139–194 provides a ligand contact to ATP; the sequence is PDDLGLPLIVKPPREGSSIGVTKVLGYSQMQDAVALSARHDPDVLCEEFIDGAEVT. Residues D266, E280, and N282 each contribute to the Mg(2+) site.

Belongs to the D-alanine--D-alanine ligase family. Mg(2+) serves as cofactor. The cofactor is Mn(2+).

It localises to the cytoplasm. The enzyme catalyses 2 D-alanine + ATP = D-alanyl-D-alanine + ADP + phosphate + H(+). Its pathway is cell wall biogenesis; peptidoglycan biosynthesis. In terms of biological role, cell wall formation. This chain is D-alanine--D-alanine ligase, found in Methylibium petroleiphilum (strain ATCC BAA-1232 / LMG 22953 / PM1).